A 459-amino-acid chain; its full sequence is Argininosuccinate lyase (459 aa).

A disordered region spans residues 440–459 (DEKKLEELRQNENRDNVYNP).

This sequence belongs to the lyase 1 family. Argininosuccinate lyase subfamily.

The protein localises to the cytoplasm. It catalyses the reaction 2-(N(omega)-L-arginino)succinate = fumarate + L-arginine. The protein operates within amino-acid biosynthesis; L-arginine biosynthesis; L-arginine from L-ornithine and carbamoyl phosphate: step 3/3. In Pyrococcus furiosus (strain ATCC 43587 / DSM 3638 / JCM 8422 / Vc1), this protein is Argininosuccinate lyase.